Reading from the N-terminus, the 181-residue chain is Large ribosomal subunit protein uL5 (181 aa).

Belongs to the universal ribosomal protein uL5 family. In terms of assembly, part of the 50S ribosomal subunit; part of the 5S rRNA/L5/L18/L25 subcomplex. Contacts the 5S rRNA and the P site tRNA. Forms a bridge to the 30S subunit in the 70S ribosome.

Functionally, this is one of the proteins that bind and probably mediate the attachment of the 5S RNA into the large ribosomal subunit, where it forms part of the central protuberance. In the 70S ribosome it contacts protein S13 of the 30S subunit (bridge B1b), connecting the 2 subunits; this bridge is implicated in subunit movement. Contacts the P site tRNA; the 5S rRNA and some of its associated proteins might help stabilize positioning of ribosome-bound tRNAs. This Helicobacter hepaticus (strain ATCC 51449 / 3B1) protein is Large ribosomal subunit protein uL5.